We begin with the raw amino-acid sequence, 95 residues long: Large ribosomal subunit protein bL28 (95 aa).

Residues 1–22 (MSRRCELTGKGPMTGNNVSHAN) form a disordered region.

The protein belongs to the bacterial ribosomal protein bL28 family.

This is Large ribosomal subunit protein bL28 from Ruegeria pomeroyi (strain ATCC 700808 / DSM 15171 / DSS-3) (Silicibacter pomeroyi).